The chain runs to 121 residues: uncharacterized protein (121 aa).

2 disordered regions span residues 24 to 43 (SGRT…GRGG) and 100 to 121 (DHEN…TDQR).

This is an uncharacterized protein from Homo sapiens (Human).